The following is a 317-amino-acid chain: Malate dehydrogenase (317 aa).

Residues 7–13 and Asp34 each bind NAD(+); that span reads GAAGGIG. The substrate site is built by Arg81 and Arg87. Residues Asn94 and 117–119 contribute to the NAD(+) site; that span reads VTN. Positions 119 and 153 each coordinate substrate. Catalysis depends on His177, which acts as the Proton acceptor. An NAD(+)-binding site is contributed by Met231.

The protein belongs to the LDH/MDH superfamily. MDH type 1 family. In terms of assembly, homodimer.

The catalysed reaction is (S)-malate + NAD(+) = oxaloacetate + NADH + H(+). Catalyzes the reversible oxidation of malate to oxaloacetate. This is Malate dehydrogenase from Actinobacillus pleuropneumoniae serotype 7 (strain AP76).